A 78-amino-acid chain; its full sequence is MSKVCQVTGKRPASGNNVSHAHNKTRRRFLPNLHTHRFWVEGENRWVKLKVSGKGLRMIDKLGIDQVLADMRTRGEKI.

Residues 1–24 are disordered; sequence MSKVCQVTGKRPASGNNVSHAHNK.

It belongs to the bacterial ribosomal protein bL28 family.

The chain is Large ribosomal subunit protein bL28 from Nitrosococcus oceani (strain ATCC 19707 / BCRC 17464 / JCM 30415 / NCIMB 11848 / C-107).